The primary structure comprises 492 residues: Catalase (492 aa).

Catalysis depends on residues histidine 65 and asparagine 138. Tyrosine 348 contacts heme.

This sequence belongs to the catalase family. Homotetramer. It depends on heme as a cofactor.

The protein localises to the cytoplasm. It localises to the cytosol. It is found in the peroxisome matrix. It carries out the reaction 2 H2O2 = O2 + 2 H2O. In terms of biological role, catalyzes the degradation of hydrogen peroxide (H(2)O(2)) generated by peroxisomal oxidases to water and oxygen, thereby protecting cells from the toxic effects of hydrogen peroxide. The protein is Catalase (CATA) of Triticum aestivum (Wheat).